The primary structure comprises 345 residues: Myb/SANT-like DNA-binding domain-containing protein 4 (345 aa).

One can recognise a Myb-like domain in the interval 4–77; the sequence is LKRKRKSNFS…EVKRRYLDWR (74 aa). Residue Lys9 forms a Glycyl lysine isopeptide (Lys-Gly) (interchain with G-Cter in SUMO2) linkage. A Phosphoserine modification is found at Ser106. Residues Lys114 and Lys142 each participate in a glycyl lysine isopeptide (Lys-Gly) (interchain with G-Cter in SUMO2) cross-link. Positions 139-175 are disordered; it reads TEVKVEEEERDPQSPEFEIEEEEEMLSSVIPDSRREN. Thr188 carries the phosphothreonine modification. Residues 202-344 adopt a coiled-coil conformation; the sequence is HLLMNIEKQK…RLRIQKEGHL (143 aa). Residues Lys237, Lys254, and Lys273 each participate in a glycyl lysine isopeptide (Lys-Gly) (interchain with G-Cter in SUMO2) cross-link.

The sequence is that of Myb/SANT-like DNA-binding domain-containing protein 4 (Msantd4) from Mus musculus (Mouse).